The following is a 171-amino-acid chain: S-ribosylhomocysteine lyase (171 aa).

Positions 54, 58, and 128 each coordinate Fe cation.

It belongs to the LuxS family. As to quaternary structure, homodimer. It depends on Fe cation as a cofactor.

The enzyme catalyses S-(5-deoxy-D-ribos-5-yl)-L-homocysteine = (S)-4,5-dihydroxypentane-2,3-dione + L-homocysteine. Its function is as follows. Involved in the synthesis of autoinducer 2 (AI-2) which is secreted by bacteria and is used to communicate both the cell density and the metabolic potential of the environment. The regulation of gene expression in response to changes in cell density is called quorum sensing. Catalyzes the transformation of S-ribosylhomocysteine (RHC) to homocysteine (HC) and 4,5-dihydroxy-2,3-pentadione (DPD). This is S-ribosylhomocysteine lyase from Yersinia enterocolitica serotype O:8 / biotype 1B (strain NCTC 13174 / 8081).